Consider the following 202-residue polypeptide: Imidazoleglycerol-phosphate dehydratase (202 aa).

It belongs to the imidazoleglycerol-phosphate dehydratase family.

The protein resides in the cytoplasm. The catalysed reaction is D-erythro-1-(imidazol-4-yl)glycerol 3-phosphate = 3-(imidazol-4-yl)-2-oxopropyl phosphate + H2O. It participates in amino-acid biosynthesis; L-histidine biosynthesis; L-histidine from 5-phospho-alpha-D-ribose 1-diphosphate: step 6/9. The sequence is that of Imidazoleglycerol-phosphate dehydratase from Parasynechococcus marenigrum (strain WH8102).